The chain runs to 614 residues: Leucine-rich repeat and immunoglobulin-like domain-containing nogo receptor-interacting protein 1 (614 aa).

The N-terminal stretch at M1–G35 is a signal peptide. Intrachain disulfides connect C36-C42 and C40-C51. In terms of domain architecture, LRRNT spans C36 to T65. The Extracellular portion of the chain corresponds to C36–T555. LRR repeat units lie at residues E66 to S87, H90 to N111, N114 to G135, N138 to D159, N162 to G183, S186 to H207, G210 to R231, N258 to H279, Y282 to E303, R306 to G327, and Y330 to S351. The N-linked (GlcNAc...) asparagine glycan is linked to N138. N196 carries an N-linked (GlcNAc...) asparagine glycan. N-linked (GlcNAc...) asparagine glycans are attached at residues N258, N268, and N287. N-linked (GlcNAc...) asparagine glycosylation is present at N335. The LRRCT domain maps to N363 to R417. Disulfide bonds link C367/C390, C369/C415, and C440/C491. The 103-residue stretch at P405–H507 folds into the Ig-like C2-type domain. 4 N-linked (GlcNAc...) asparagine glycosylation sites follow: N486, N499, N520, and N536. A helical transmembrane segment spans residues T556–W576. Over S577–I614 the chain is Cytoplasmic. S596 is subject to Phosphoserine.

In terms of assembly, homotetramer. Forms a ternary complex with RTN4R/NGFR and RTN4R/TNFRSF19. Interacts with NGRF, RTN4R and MYT1L. N-glycosylated. Contains predominantly high-mannose glycans.

The protein resides in the cell membrane. Its function is as follows. Functional component of the Nogo receptor signaling complex (RTN4R/NGFR) in RhoA activation responsible for some inhibition of axonal regeneration by myelin-associated factors. Is also an important negative regulator of oligodentrocyte differentiation and axonal myelination. Acts in conjunction with RTN4 and RTN4R in regulating neuronal precursor cell motility during cortical development. In Pongo abelii (Sumatran orangutan), this protein is Leucine-rich repeat and immunoglobulin-like domain-containing nogo receptor-interacting protein 1 (LINGO1).